A 373-amino-acid polypeptide reads, in one-letter code: Dof zinc finger protein 3 (373 aa).

Residues 1–23 form a disordered region; sequence MASGGALSPVEEKPTVVKTTKAE. Over residues 10-23 the composition is skewed to basic and acidic residues; the sequence is VEEKPTVVKTTKAE. Residues 45 to 99 form a Dof-type zinc finger; sequence PCCPRCNSIKTKFCYYNNYSMAQPRYFCRECRRYWTQGGSLRNVPVGGGCRKSKR. Zn(2+)-binding residues include Cys47, Cys50, Cys72, and Cys75. Residues 297–327 form a disordered region; sequence ALGGADEQQGGGDGGEAVMTKDTGGGASSSA.

As to quaternary structure, interacts with RISBZ1/BZIP58.

Its subcellular location is the nucleus. Transcriptional activator that binds specifically to the DNA consensus core sequence 5'-AAAG-3' also known as prolamin box. Can activate the expression of genes encoding for the seed storage proteins glutelin, prolamin and globulin. Functions synergistically with RISBZ/BZIP58 to positively regulate quantitatively many seed storage proteins. Functions synergistically with RISBZ1/BZIP58 to positively regulate some metabolic enzymes, such as alanine aminotransferase and pyruvate phosphate dikinase, that are expressed in developing seeds. Functions synergistically with RISBZ1/BZIP58 to positively regulate genes that are key players in the development of aleurone layers. Functions synergistically with RISBZ1/BZIP58 to positively regulate the glutelin GLUD-1 gene in endosperm of developing seeds. Can activate the expression of the bifunctional lysine-degrading enzyme, lysine ketoglutarate reductase/saccharopine dehydrogenase (LKR/SDH), one of the key regulators determining free lysine content in plants. In germinating seeds, involved in the gibberellin-mediated activation of the alpha-amylase AMY1.1/AMY1A gene. This is Dof zinc finger protein 3 from Oryza sativa subsp. japonica (Rice).